We begin with the raw amino-acid sequence, 208 residues long: MIGWLHGTIGDRWQEGNRCWLLLICGPVGYELQVSESLWRGTALESPTTVHTHLQQREDGQQLYGFETKADRNLFRLLISVNGVGPQVALGLISGLGAVSLLQAMAAEDVKVLCQAPGVGKRTAERLSLEWRSRLQERWQQQGGSTPLRLVEPVAESRELRATLEALGYGPEEVSAAVAQAGSQGLDPEQPMEEWLRHCLAWLSRQAG.

A domain I region spans residues 1 to 67 (MIGWLHGTIG…EDGQQLYGFE (67 aa)). The domain II stretch occupies residues 68–146 (TKADRNLFRL…ERWQQQGGST (79 aa)). A flexible linker region spans residues 147 to 157 (PLRLVEPVAES). Residues 157–208 (SRELRATLEALGYGPEEVSAAVAQAGSQGLDPEQPMEEWLRHCLAWLSRQAG) form a domain III region.

The protein belongs to the RuvA family. As to quaternary structure, homotetramer. Forms an RuvA(8)-RuvB(12)-Holliday junction (HJ) complex. HJ DNA is sandwiched between 2 RuvA tetramers; dsDNA enters through RuvA and exits via RuvB. An RuvB hexamer assembles on each DNA strand where it exits the tetramer. Each RuvB hexamer is contacted by two RuvA subunits (via domain III) on 2 adjacent RuvB subunits; this complex drives branch migration. In the full resolvosome a probable DNA-RuvA(4)-RuvB(12)-RuvC(2) complex forms which resolves the HJ.

It is found in the cytoplasm. The RuvA-RuvB-RuvC complex processes Holliday junction (HJ) DNA during genetic recombination and DNA repair, while the RuvA-RuvB complex plays an important role in the rescue of blocked DNA replication forks via replication fork reversal (RFR). RuvA specifically binds to HJ cruciform DNA, conferring on it an open structure. The RuvB hexamer acts as an ATP-dependent pump, pulling dsDNA into and through the RuvAB complex. HJ branch migration allows RuvC to scan DNA until it finds its consensus sequence, where it cleaves and resolves the cruciform DNA. This is Holliday junction branch migration complex subunit RuvA from Synechococcus sp. (strain RCC307).